Consider the following 602-residue polypeptide: Histone-arginine methyltransferase CARM1 (602 aa).

In terms of domain architecture, SAM-dependent MTase PRMT-type spans 117–424 (AVQYFQFYGY…KKQSYDISIV (308 aa)). Residues Q130, R139, G163, E185, E214, and S242 each contribute to the S-adenosyl-L-methionine site. A transactivation domain region spans residues 470–602 (TGGAYTMNTG…ITTNTMHYGS (133 aa)).

The protein belongs to the class I-like SAM-binding methyltransferase superfamily. Protein arginine N-methyltransferase family. Homodimer.

Its subcellular location is the nucleus. The protein localises to the cytoplasm. It localises to the chromosome. It carries out the reaction L-arginyl-[protein] + 2 S-adenosyl-L-methionine = N(omega),N(omega)-dimethyl-L-arginyl-[protein] + 2 S-adenosyl-L-homocysteine + 2 H(+). Its function is as follows. Methylates (mono- and asymmetric dimethylation) the guanidino nitrogens of arginyl residues in several proteins involved in DNA packaging, transcription regulation, pre-mRNA splicing, and mRNA stability. Recruited to promoters upon gene activation together with histone acetyltransferases from EP300/P300 and p160 families, methylates histone H3 at 'Arg-17' (H3R17me) and activates transcription via chromatin remodeling. The chain is Histone-arginine methyltransferase CARM1 (carm1) from Xenopus laevis (African clawed frog).